Consider the following 1155-residue polypeptide: Polarized growth protein rax2 (1155 aa).

Positions 1–27 are cleaved as a signal peptide; the sequence is MAIYSSFWIRLYFTFRFFCYFLTSVVA. The Extracellular segment spans residues 28–1105; it reads SDVSFLGDFS…KYDHIGQPRY (1078 aa). N-linked (GlcNAc...) asparagine glycosylation is found at Asn44, Asn61, Asn103, Asn118, Asn124, Asn156, Asn161, Asn182, Asn190, Asn213, Asn224, Asn306, Asn391, Asn413, Asn419, Asn510, Asn519, Asn554, Asn562, Asn607, Asn630, Asn713, Asn722, Asn743, Asn769, Asn793, Asn807, Asn824, Asn840, Asn848, Asn876, Asn893, Asn899, Asn916, Asn945, Asn1009, Asn1030, and Asn1055. The helical transmembrane segment at 1106 to 1126 threads the bilayer; the sequence is VVIISLGISIGVMFLIMSGSI. Residues 1127–1155 lie on the Cytoplasmic side of the membrane; sequence VVEIIHWFFSEHVETLHDYSNFLKELKTQ.

The protein belongs to the RAX2 family. Interacts with for3 and tea1.

It localises to the cell membrane. Functionally, controls cell polarity, through the G1 phase of mitosis, via regulation of for3 localization. Required for actin cable formation where it directs the spatial distribution of the actin cables. The protein is Polarized growth protein rax2 of Schizosaccharomyces pombe (strain 972 / ATCC 24843) (Fission yeast).